The sequence spans 540 residues: Acrosin-binding protein (540 aa).

An N-terminal signal peptide occupies residues 1-24 (MKLAASFLLMLLEVLLLPETPLSA). Residues 25 to 104 (EEALASTPGS…ASWFESFCQF (80 aa)) are pro-ACR binding. The propeptide at 25 to 272 (EEALASTPGS…NPSFFTPRVR (248 aa)) is removed in mature form. The segment at 181 to 266 (SLSLGGKEQQ…SKSLSSNPSF (86 aa)) is disordered. A compositionally biased stretch (basic and acidic residues) spans 195-213 (LGLEQQHKQEQIQEHKLEE). Residues 214–241 (AQEQEEQEEEEEEEEAKQEEGQGTEEGL) show a composition bias toward acidic residues. The segment covering 256-266 (QSKSLSSNPSF) has biased composition (polar residues). A pro-ACR binding region spans residues 316–424 (LPHTETLMVL…NQAKIPEKGR (109 aa)).

Binds pro-ACR. Does not bind the mature form of ACR. In terms of assembly, binds pro-ACR. Does not bind mature form of ACR. The N-terminus is blocked. In terms of processing, phosphorylated on Tyr residues in capacitated sperm. Post-translationally, synthesized as a 60-kDa precursor, the 32-kDa mature form is post-translationally produced by the removal of the N-terminal half of the precursor during sperm maturation in the testis and/or epididymis.

The protein localises to the cytoplasmic vesicle. It localises to the secretory vesicle. The protein resides in the acrosome. Functionally, acrosomal protein that maintains proacrosin (pro-ACR) as an enzymatically inactive zymogen in the acrosome. Involved also in the acrosome formation. Its function is as follows. Maintains pro-ACR as an enzymatically inactive zymogen in the acrosome until acrosomal exocytosis. Partially also contributes to the assembly of acrosomal proteins to form an acrosomal granule. In terms of biological role, rodent specific isoform that participates in the formation of the acrosomal granule into the center of the acrosomal vesicle during early spermiogenesis. In the fertilization process promotes ACR release from the acrosome during acrosomal exocytosis. The chain is Acrosin-binding protein from Rattus norvegicus (Rat).